We begin with the raw amino-acid sequence, 142 residues long: Ribosome-binding factor A (142 aa).

The tract at residues 118-142 (DKNGDAEVDDTQVDDEPSVDSEKGE) is disordered. Positions 123 to 136 (AEVDDTQVDDEPSV) are enriched in acidic residues.

This sequence belongs to the RbfA family. As to quaternary structure, monomer. Binds 30S ribosomal subunits, but not 50S ribosomal subunits or 70S ribosomes.

The protein resides in the cytoplasm. In terms of biological role, one of several proteins that assist in the late maturation steps of the functional core of the 30S ribosomal subunit. Associates with free 30S ribosomal subunits (but not with 30S subunits that are part of 70S ribosomes or polysomes). Required for efficient processing of 16S rRNA. May interact with the 5'-terminal helix region of 16S rRNA. The sequence is that of Ribosome-binding factor A from Colwellia psychrerythraea (strain 34H / ATCC BAA-681) (Vibrio psychroerythus).